The primary structure comprises 248 residues: Homeobox protein CHOX-CAD (248 aa).

A DNA-binding region (homeobox) is located at residues 137–196 (KDKYRVVYTDHQRLELEKEFHYSRYITIRRKAELAAALGLTERQVKIWFQNRRAKERKVN). The disordered stretch occupies residues 192-248 (ERKVNKKKLQQQSQPTSTTTPTPPAVGTPGPMGTLCSGSAPSLVSSSPLTIKEEFMP). Composition is skewed to low complexity over residues 201–211 (QQQSQPTSTTT) and 228–240 (SGSAPSLVSSSPL).

Belongs to the Caudal homeobox family.

It localises to the nucleus. Its function is as follows. May play an important role during the early steps of organogenesis. The chain is Homeobox protein CHOX-CAD (CHOX-CAD1) from Gallus gallus (Chicken).